The primary structure comprises 159 residues: ATP synthase subunit delta, mitochondrial (159 aa).

The transit peptide at 1-23 (MFRLSAARTLAKSVNTVVAKRTY) directs the protein to the mitochondrion.

Belongs to the ATPase epsilon chain family. F-type ATPases have 2 components, CF(1) - the catalytic core - and CF(0) - the membrane proton channel. CF(1) has five subunits: alpha(3), beta(3), gamma(1), delta(1), epsilon(1). CF(0) has three main subunits: a, b and c.

The protein resides in the mitochondrion. Its subcellular location is the mitochondrion inner membrane. Mitochondrial membrane ATP synthase (F(1)F(0) ATP synthase or Complex V) produces ATP from ADP in the presence of a proton gradient across the membrane which is generated by electron transport complexes of the respiratory chain. F-type ATPases consist of two structural domains, F(1) - containing the extramembraneous catalytic core, and F(0) - containing the membrane proton channel, linked together by a central stalk and a peripheral stalk. During catalysis, ATP turnover in the catalytic domain of F(1) is coupled via a rotary mechanism of the central stalk subunits to proton translocation. Part of the complex F(1) domain and of the central stalk which is part of the complex rotary element. Rotation of the central stalk against the surrounding alpha(3)beta(3) subunits leads to hydrolysis of ATP in three separate catalytic sites on the beta subunits. The protein is ATP synthase subunit delta, mitochondrial (ATP16) of Kluyveromyces lactis (strain ATCC 8585 / CBS 2359 / DSM 70799 / NBRC 1267 / NRRL Y-1140 / WM37) (Yeast).